The sequence spans 328 residues: Putative GDP-L-fucose synthase 2 (328 aa).

At Ala-2 the chain carries N-acetylalanine. NADP(+) is bound at residue 26-32 (GHRGLVG). The active-site Proton donor/acceptor is the Tyr-152. Residues Lys-156, 179-182 (PTNL), and His-195 each bind NADP(+). 4 residues coordinate substrate: Arg-203, Trp-218, Arg-225, and Asp-285.

Belongs to the NAD(P)-dependent epimerase/dehydratase family. Fucose synthase subfamily. In terms of assembly, homodimer.

The enzyme catalyses GDP-beta-L-fucose + NADP(+) = GDP-4-dehydro-alpha-D-rhamnose + NADPH + H(+). The protein operates within nucleotide-sugar biosynthesis; GDP-L-fucose biosynthesis via de novo pathway; GDP-L-fucose from GDP-alpha-D-mannose: step 2/2. Functionally, catalyzes the two-step NADP-dependent conversion of GDP-4-dehydro-6-deoxy-D-mannose to GDP-fucose, involving an epimerase and a reductase reaction. The sequence is that of Putative GDP-L-fucose synthase 2 (GER2) from Arabidopsis thaliana (Mouse-ear cress).